The primary structure comprises 485 residues: Glutamate--tRNA ligase (485 aa).

The short motif at 12–22 (PSPTGEPHVGT) is the 'HIGH' region element. The Zn(2+) site is built by C109, C111, C136, and H138. The 'KMSKS' region signature appears at 253-257 (KLSKR). K256 serves as a coordination point for ATP.

Belongs to the class-I aminoacyl-tRNA synthetase family. Glutamate--tRNA ligase type 1 subfamily. Monomer. Requires Zn(2+) as cofactor.

Its subcellular location is the cytoplasm. The catalysed reaction is tRNA(Glu) + L-glutamate + ATP = L-glutamyl-tRNA(Glu) + AMP + diphosphate. In terms of biological role, catalyzes the attachment of glutamate to tRNA(Glu) in a two-step reaction: glutamate is first activated by ATP to form Glu-AMP and then transferred to the acceptor end of tRNA(Glu). This is Glutamate--tRNA ligase from Agrobacterium fabrum (strain C58 / ATCC 33970) (Agrobacterium tumefaciens (strain C58)).